Consider the following 382-residue polypeptide: Pyrimidine monooxygenase RutA (382 aa).

FMN-binding positions include 68-69 (IK), N134, E143, 159-160 (RY), and S209.

This sequence belongs to the NtaA/SnaA/DszA monooxygenase family. RutA subfamily.

It catalyses the reaction uracil + FMNH2 + NADH + O2 = (Z)-3-ureidoacrylate + FMN + NAD(+) + H2O + H(+). The enzyme catalyses thymine + FMNH2 + NADH + O2 = (Z)-2-methylureidoacrylate + FMN + NAD(+) + H2O + H(+). Catalyzes the pyrimidine ring opening between N-3 and C-4 by an unusual flavin hydroperoxide-catalyzed mechanism, adding oxygen atoms in the process to yield ureidoacrylate peracid, that immediately reacts with FMN forming ureidoacrylate and FMN-N(5)-oxide. The FMN-N(5)-oxide reacts spontaneously with NADH to produce FMN. Requires the flavin reductase RutF to regenerate FMN in vivo. This is Pyrimidine monooxygenase RutA from Escherichia coli O8 (strain IAI1).